A 231-amino-acid polypeptide reads, in one-letter code: Lipoprotein-releasing system ATP-binding protein LolD (231 aa).

Residues 6-231 (LQVQAVSKSY…YLQAVAEHAQ (226 aa)) form the ABC transporter domain. Residue 42-49 (GTSGSGKS) coordinates ATP.

Belongs to the ABC transporter superfamily. Lipoprotein translocase (TC 3.A.1.125) family. The complex is composed of two ATP-binding proteins (LolD) and two transmembrane proteins (LolC and LolE).

It is found in the cell inner membrane. Functionally, part of the ABC transporter complex LolCDE involved in the translocation of mature outer membrane-directed lipoproteins, from the inner membrane to the periplasmic chaperone, LolA. Responsible for the formation of the LolA-lipoprotein complex in an ATP-dependent manner. In Shewanella sp. (strain MR-4), this protein is Lipoprotein-releasing system ATP-binding protein LolD.